Reading from the N-terminus, the 1097-residue chain is DNA-directed RNA polymerase subunit beta (1097 aa).

Residues 1072–1097 (QDINPRRNTPSRPTYESLGTSEYEED) form a disordered region. Residues 1077–1091 (RRNTPSRPTYESLGT) show a composition bias toward polar residues.

Belongs to the RNA polymerase beta chain family. In terms of assembly, in cyanobacteria the RNAP catalytic core is composed of 2 alpha, 1 beta, 1 beta', 1 gamma and 1 omega subunit. When a sigma factor is associated with the core the holoenzyme is formed, which can initiate transcription.

It catalyses the reaction RNA(n) + a ribonucleoside 5'-triphosphate = RNA(n+1) + diphosphate. Its function is as follows. DNA-dependent RNA polymerase catalyzes the transcription of DNA into RNA using the four ribonucleoside triphosphates as substrates. The polypeptide is DNA-directed RNA polymerase subunit beta (Prochlorococcus marinus (strain MIT 9301)).